Consider the following 403-residue polypeptide: Acetylornithine aminotransferase (403 aa).

Pyridoxal 5'-phosphate-binding positions include 107-108 and phenylalanine 140; that span reads GA. Arginine 143 contributes to the N(2)-acetyl-L-ornithine binding site. A pyridoxal 5'-phosphate-binding site is contributed by 225 to 228; the sequence is DEVQ. N6-(pyridoxal phosphate)lysine is present on lysine 254. Serine 282 is a N(2)-acetyl-L-ornithine binding site. Threonine 283 provides a ligand contact to pyridoxal 5'-phosphate.

The protein belongs to the class-III pyridoxal-phosphate-dependent aminotransferase family. ArgD subfamily. As to quaternary structure, homodimer. Pyridoxal 5'-phosphate is required as a cofactor.

It is found in the cytoplasm. The enzyme catalyses N(2)-acetyl-L-ornithine + 2-oxoglutarate = N-acetyl-L-glutamate 5-semialdehyde + L-glutamate. The protein operates within amino-acid biosynthesis; L-arginine biosynthesis; N(2)-acetyl-L-ornithine from L-glutamate: step 4/4. In Vibrio cholerae serotype O1 (strain ATCC 39315 / El Tor Inaba N16961), this protein is Acetylornithine aminotransferase.